Reading from the N-terminus, the 332-residue chain is Ribosomal RNA small subunit methyltransferase H (332 aa).

S-adenosyl-L-methionine-binding positions include 36–38 (GGY), Asp54, Phe81, Asp102, and Gln109. The interval 297-318 (ARSAKLRGAERTEAPAHAAGDL) is disordered.

Belongs to the methyltransferase superfamily. RsmH family.

The protein resides in the cytoplasm. It catalyses the reaction cytidine(1402) in 16S rRNA + S-adenosyl-L-methionine = N(4)-methylcytidine(1402) in 16S rRNA + S-adenosyl-L-homocysteine + H(+). Specifically methylates the N4 position of cytidine in position 1402 (C1402) of 16S rRNA. The sequence is that of Ribosomal RNA small subunit methyltransferase H from Rhodopseudomonas palustris (strain TIE-1).